Reading from the N-terminus, the 155-residue chain is Small ribosomal subunit protein uS7c (155 aa).

This sequence belongs to the universal ribosomal protein uS7 family. As to quaternary structure, part of the 30S ribosomal subunit.

It is found in the plastid. It localises to the chloroplast. Its function is as follows. One of the primary rRNA binding proteins, it binds directly to 16S rRNA where it nucleates assembly of the head domain of the 30S subunit. This Yucca glauca (Soapweed yucca) protein is Small ribosomal subunit protein uS7c (rps7).